The primary structure comprises 747 residues: Probable type III restriction-modification enzyme HindVI Mod subunit (747 aa).

Positions 267–270 (DPPY) are binding of S-adenosyl methionine.

It belongs to the N(4)/N(6)-methyltransferase family. In terms of assembly, homodimer, also forms a functional restriction-competent complex with Res.

It carries out the reaction a 2'-deoxyadenosine in DNA + S-adenosyl-L-methionine = an N(6)-methyl-2'-deoxyadenosine in DNA + S-adenosyl-L-homocysteine + H(+). A beta subtype methylase that binds the system-specific DNA recognition site 5'-CGAAT-3' and methylates A-4 (of only 1 strand). DNA restriction requires both the Res and Mod subunits. This Haemophilus influenzae (strain ATCC 51907 / DSM 11121 / KW20 / Rd) protein is Probable type III restriction-modification enzyme HindVI Mod subunit.